A 137-amino-acid polypeptide reads, in one-letter code: Putative pumilio homolog 25 (137 aa).

2 Pumilio repeats span residues 70-105 (EFDSYFENLVKDRVGNYVVQRLIWGFKRTGIDLPHS) and 108-137 (SVLVTRSIHLCKHRYGYQVIEAFDRSTRLA).

Its subcellular location is the cytoplasm. In terms of biological role, sequence-specific RNA-binding protein that regulates translation and mRNA stability by binding the 3'-UTR of target mRNAs. This chain is Putative pumilio homolog 25 (APUM25), found in Arabidopsis thaliana (Mouse-ear cress).